Consider the following 110-residue polypeptide: PCNA-associated factor (110 aa).

Lysine 15 participates in a covalent cross-link: Glycyl lysine isopeptide (Lys-Gly) (interchain with G-Cter in ubiquitin). The D-box signature appears at 23-34 (RKVLGSSTFVTN). Position 24 is an N6-acetyllysine; alternate (lysine 24). Residue lysine 24 forms a Glycyl lysine isopeptide (Lys-Gly) (interchain with G-Cter in ubiquitin); alternate linkage. A Phosphoserine modification is found at serine 28. The segment covering 29 to 39 (STFVTNSSGSS) has biased composition (low complexity). The interval 29 to 110 (STFVTNSSGS…QPDHRDDENE (82 aa)) is disordered. The PIP-box motif lies at 61 to 71 (QKGIGEFFRLS). Serine 71 bears the Phosphoserine mark. The span at 71–80 (SPKDSKKENQ) shows a compositional bias: basic and acidic residues. Residues 77–79 (KEN) carry the KEN box motif. The short motif at 84–96 (EAGSSGLGKAKRK) is the Initiation motif element.

As to quaternary structure, interacts (when monoubiquitinated at Lys-15 and Lys-24) with PCNA. Interacts with isoform 2/p33ING1b of ING1. Interacts with BRCA1. Monoubiquitinated at Lys-15 and Lys-24 during normal S phase, promoting its association with PCNA. Also diubiquitinated at these 2 sites. Following DNA damage, monoubiquitin chains at Lys-15 and Lys-24 are probably extended, leading to disrupt the interaction with PCNA. Polyubiquitinated by the APC/C complex at the mitotic exit, leading to its degradation by the proteasome.

The protein resides in the nucleus. It is found in the cytoplasm. Its subcellular location is the perinuclear region. Functionally, PCNA-binding protein that acts as a regulator of DNA repair during DNA replication. Following DNA damage, the interaction with PCNA is disrupted, facilitating the interaction between monoubiquitinated PCNA and the translesion DNA synthesis DNA polymerase eta (POLH) at stalled replisomes, facilitating the bypass of replication-fork-blocking lesions. Also acts as a regulator of centrosome number. In Rattus norvegicus (Rat), this protein is PCNA-associated factor.